The sequence spans 411 residues: Mitotic apparatus protein p62 (411 aa).

3 stretches are compositionally biased toward acidic residues: residues 134–156 (AYEV…EEEE), 183–201 (ELDE…EEEI), and 246–321 (DDDE…EEDS). The tract at residues 134 to 378 (AYEVGDEDLE…KSPSKPKKEE (245 aa)) is disordered. Basic and acidic residues predominate over residues 351–367 (GMKEKKTYSLEDMKQDL).

Belongs to the nucleoplasmin family. In terms of processing, phosphorylated by CaM-kinase II in vitro.

It is found in the nucleus. Functionally, required for mitotic progression. Binds to chromatin. In Lytechinus pictus (Painted sea urchin), this protein is Mitotic apparatus protein p62.